We begin with the raw amino-acid sequence, 362 residues long: Chorismate synthase (362 aa).

NADP(+) is bound at residue arginine 47. Residues 124–126, glycine 286, 301–305, and arginine 327 contribute to the FMN site; these read RAS and KPTAT.

The protein belongs to the chorismate synthase family. As to quaternary structure, homotetramer. Requires FMNH2 as cofactor.

It carries out the reaction 5-O-(1-carboxyvinyl)-3-phosphoshikimate = chorismate + phosphate. It functions in the pathway metabolic intermediate biosynthesis; chorismate biosynthesis; chorismate from D-erythrose 4-phosphate and phosphoenolpyruvate: step 7/7. In terms of biological role, catalyzes the anti-1,4-elimination of the C-3 phosphate and the C-6 proR hydrogen from 5-enolpyruvylshikimate-3-phosphate (EPSP) to yield chorismate, which is the branch point compound that serves as the starting substrate for the three terminal pathways of aromatic amino acid biosynthesis. This reaction introduces a second double bond into the aromatic ring system. In Prochlorococcus marinus (strain MIT 9303), this protein is Chorismate synthase.